A 729-amino-acid chain; its full sequence is Polyribonucleotide nucleotidyltransferase (729 aa).

2 residues coordinate Mg(2+): Asp485 and Asp491. One can recognise a KH domain in the interval 552-611 (PRITTMKVAEDKIRTIIGKGGATIKGLIESTGVSIDIDDSGVIQLFSPDKMALEEAQKQI). The S1 motif domain maps to 621 to 689 (GQTYQGKVSK…KQGRVKLEWK (69 aa)). A disordered region spans residues 710–729 (TMEEQSEEINSGNKISEEEE).

Belongs to the polyribonucleotide nucleotidyltransferase family. As to quaternary structure, component of the RNA degradosome, which is a multiprotein complex involved in RNA processing and mRNA degradation. Mg(2+) is required as a cofactor.

Its subcellular location is the cytoplasm. The enzyme catalyses RNA(n+1) + phosphate = RNA(n) + a ribonucleoside 5'-diphosphate. Involved in mRNA degradation. Catalyzes the phosphorolysis of single-stranded polyribonucleotides processively in the 3'- to 5'-direction. This Legionella pneumophila (strain Paris) protein is Polyribonucleotide nucleotidyltransferase.